A 446-amino-acid chain; its full sequence is Ubiquitin carboxyl-terminal hydrolase MINDY-3 (446 aa).

Residue Cys51 is the Nucleophile of the active site. Basic and acidic residues predominate over residues 117–128 (DNSDITDSHPEP). The segment at 117–137 (DNSDITDSHPEPESSQPTDTP) is disordered. His288 (proton acceptor) is an active-site residue.

The protein belongs to the MINDY deubiquitinase family. FAM188 subfamily.

The protein resides in the nucleus. It carries out the reaction Thiol-dependent hydrolysis of ester, thioester, amide, peptide and isopeptide bonds formed by the C-terminal Gly of ubiquitin (a 76-residue protein attached to proteins as an intracellular targeting signal).. In terms of biological role, hydrolase that can remove 'Lys-48'-linked conjugated ubiquitin from proteins. The protein is Ubiquitin carboxyl-terminal hydrolase MINDY-3 (mindy3) of Danio rerio (Zebrafish).